We begin with the raw amino-acid sequence, 460 residues long: Probable elastin-binding protein EbpS (460 aa).

Residues 1–40 (MSNNNFKDDFEKNRQSINPDEHQTELKEDDKTNENKKEAD) are compositionally biased toward basic and acidic residues. The disordered stretch occupies residues 1–277 (MSNNNFKDDF…NQYNDQSEGK (277 aa)). Positions 41-57 (SQNSLSNNSNQQFPPRN) are enriched in low complexity. The segment covering 74-128 (QQDDKHQKNSDAKTTEGSLDDRYDEAQLQQQHDKSQQQNKTEKQSQDNRMKDGKD) has biased composition (basic and acidic residues). The span at 177-192 (ATGAGIAGAAGVAGAA) shows a compositional bias: low complexity. Over residues 203–226 (DKQDSKHSNHENDEKSVKNDDQKQ) the composition is skewed to basic and acidic residues. Low complexity predominate over residues 264–273 (SNQNNQYNDQ). Residues 285–305 (ILLPLIAAILILGAIAIFGGM) form a helical membrane-spanning segment. The span at 313–359 (SKSDDQKIANQSKKDSDKKDGAQSEDNKDKKSDSNKDKKSDSDKNAD) shows a compositional bias: basic and acidic residues. Residues 313 to 411 (SKSDDQKIAN…NQQATQGQQS (99 aa)) form a disordered region. Residues 364-411 (NSSSNPNATSTNNNDNVANNNSNYTNQNQQDNANQNSNNQQATQGQQS) are compositionally biased toward low complexity. Residues 410 to 458 (QSHTVYGQENLYRIAIQYYGEGTQANVDKIKRANGLSSNNIHNGQTLVI) enclose the LysM domain.

It is found in the cell membrane. This chain is Probable elastin-binding protein EbpS (ebpS), found in Staphylococcus epidermidis (strain ATCC 35984 / DSM 28319 / BCRC 17069 / CCUG 31568 / BM 3577 / RP62A).